The chain runs to 558 residues: Glucose-6-phosphate isomerase (558 aa).

N-acetylalanine is present on A2. K12 is subject to N6-acetyllysine. K34 is subject to N6-(2-hydroxyisobutyryl)lysine. S107 carries the phosphoserine modification. A Phosphothreonine modification is found at T109. K142 carries the N6-acetyllysine modification. Residue G159 to S160 coordinates D-glucose 6-phosphate. Residue S185 is modified to Phosphoserine; by CK2. Residue S210–T215 participates in D-glucose 6-phosphate binding. The residue at position 250 (T250) is a Phosphothreonine. D-glucose 6-phosphate is bound by residues Q354, E358, and H389. The active-site Proton donor is the E358. H389 is an active-site residue. Position 454 is an N6-acetyllysine; alternate (K454). K454 is subject to N6-malonyllysine; alternate. The residue at position 454 (K454) is an N6-succinyllysine; alternate. S455 bears the Phosphoserine mark. K519 contacts D-glucose 6-phosphate. K519 is an active-site residue.

This sequence belongs to the GPI family. In terms of assembly, homodimer in the catalytically active form, monomer in the secreted form. Phosphorylation at Ser-185 by CK2 has been shown to decrease enzymatic activity and may contribute to secretion by a non-classical secretory pathway. Post-translationally, ISGylated.

Its subcellular location is the cytoplasm. It localises to the secreted. The enzyme catalyses alpha-D-glucose 6-phosphate = beta-D-fructose 6-phosphate. It participates in carbohydrate degradation; glycolysis; D-glyceraldehyde 3-phosphate and glycerone phosphate from D-glucose: step 2/4. Functionally, in the cytoplasm, catalyzes the conversion of glucose-6-phosphate to fructose-6-phosphate, the second step in glycolysis, and the reverse reaction during gluconeogenesis. Besides it's role as a glycolytic enzyme, also acts as a secreted cytokine: acts as an angiogenic factor (AMF) that stimulates endothelial cell motility. Acts as a neurotrophic factor, neuroleukin, for spinal and sensory neurons. It is secreted by lectin-stimulated T-cells and induces immunoglobulin secretion. In Sus scrofa (Pig), this protein is Glucose-6-phosphate isomerase.